Reading from the N-terminus, the 426-residue chain is Elongation factor 1-alpha (426 aa).

The region spanning 5-221 is the tr-type G domain; that stretch reads KPHMNLAVIG…DTFKEPDKPT (217 aa). Positions 14-21 are G1; that stretch reads GHIDHGKS. GTP is bound at residue 14–21; the sequence is GHIDHGKS. Ser21 lines the Mg(2+) pocket. Positions 70–74 are G2; it reads GITID. Positions 91–94 are G3; sequence DCPG. GTP-binding positions include 91-95 and 146-149; these read DCPGH and NKMD. The G4 stretch occupies residues 146-149; it reads NKMD. Residues 185 to 187 form a G5 region; sequence SSF.

It belongs to the TRAFAC class translation factor GTPase superfamily. Classic translation factor GTPase family. EF-Tu/EF-1A subfamily.

The protein localises to the cytoplasm. The catalysed reaction is GTP + H2O = GDP + phosphate + H(+). Functionally, GTP hydrolase that promotes the GTP-dependent binding of aminoacyl-tRNA to the A-site of ribosomes during protein biosynthesis. The polypeptide is Elongation factor 1-alpha (Methanosphaerula palustris (strain ATCC BAA-1556 / DSM 19958 / E1-9c)).